The sequence spans 248 residues: 4-hydroxy-tetrahydrodipicolinate reductase (248 aa).

NAD(+) contacts are provided by residues 8–13, 75–77, and 99–102; these read GAKGRM, GTT, and ATNM. Residue H131 is the Proton donor/acceptor of the active site. H132 serves as a coordination point for (S)-2,3,4,5-tetrahydrodipicolinate. The Proton donor role is filled by K135. Position 141–142 (141–142) interacts with (S)-2,3,4,5-tetrahydrodipicolinate; that stretch reads GT.

It belongs to the DapB family.

Its subcellular location is the cytoplasm. The catalysed reaction is (S)-2,3,4,5-tetrahydrodipicolinate + NAD(+) + H2O = (2S,4S)-4-hydroxy-2,3,4,5-tetrahydrodipicolinate + NADH + H(+). It catalyses the reaction (S)-2,3,4,5-tetrahydrodipicolinate + NADP(+) + H2O = (2S,4S)-4-hydroxy-2,3,4,5-tetrahydrodipicolinate + NADPH + H(+). Its pathway is amino-acid biosynthesis; L-lysine biosynthesis via DAP pathway; (S)-tetrahydrodipicolinate from L-aspartate: step 4/4. Its function is as follows. Catalyzes the conversion of 4-hydroxy-tetrahydrodipicolinate (HTPA) to tetrahydrodipicolinate. This chain is 4-hydroxy-tetrahydrodipicolinate reductase, found in Campylobacter jejuni subsp. doylei (strain ATCC BAA-1458 / RM4099 / 269.97).